The primary structure comprises 348 residues: Anthranilate phosphoribosyltransferase (348 aa).

Residues glycine 91, 94–95 (GD), threonine 99, 101–104 (NIST), 119–127 (KHGNRSASG), and serine 131 each bind 5-phospho-alpha-D-ribose 1-diphosphate. Glycine 91 provides a ligand contact to anthranilate. Residue serine 103 coordinates Mg(2+). Asparagine 122 serves as a coordination point for anthranilate. Anthranilate is bound at residue arginine 177. Positions 236 and 237 each coordinate Mg(2+).

The protein belongs to the anthranilate phosphoribosyltransferase family. As to quaternary structure, homodimer. Mg(2+) is required as a cofactor.

The enzyme catalyses N-(5-phospho-beta-D-ribosyl)anthranilate + diphosphate = 5-phospho-alpha-D-ribose 1-diphosphate + anthranilate. The protein operates within amino-acid biosynthesis; L-tryptophan biosynthesis; L-tryptophan from chorismate: step 2/5. Catalyzes the transfer of the phosphoribosyl group of 5-phosphorylribose-1-pyrophosphate (PRPP) to anthranilate to yield N-(5'-phosphoribosyl)-anthranilate (PRA). This Synechococcus elongatus (strain ATCC 33912 / PCC 7942 / FACHB-805) (Anacystis nidulans R2) protein is Anthranilate phosphoribosyltransferase.